The following is an 88-amino-acid chain: MANTKSAKKFIIKSKKNRNRNLSNRSMLKTFIKKVNIAINKRNISEALFAFKNMQKCIDRQSIKGLIHKNKAARCKSKIFRRISLLIN.

Belongs to the bacterial ribosomal protein bS20 family.

Binds directly to 16S ribosomal RNA. The chain is Small ribosomal subunit protein bS20 from Blochmanniella floridana.